The primary structure comprises 33 residues: Brevinin-2PTb (33 aa).

Cys-27 and Cys-33 are disulfide-bonded.

Expressed by the skin glands.

It localises to the secreted. In terms of biological role, has antibacterial activity against the Gram-positive bacterium S.aureus ATCC 25923 (MIC=9 uM) and the Gram-negative bacterium E.coli ATCC 25726 (MIC=9 uM). This chain is Brevinin-2PTb, found in Pulchrana picturata (Malaysian fire frog).